We begin with the raw amino-acid sequence, 751 residues long: Zinc finger protein 184 (751 aa).

In terms of domain architecture, KRAB spans 28–99 (VTFKDVIVDF…EPSIPVGTCA (72 aa)). S117, S122, and S199 each carry phosphoserine. Positions 191–202 (SNLVTQEPSPEE) are enriched in polar residues. Positions 191–212 (SNLVTQEPSPEETSTKRSIKQN) are disordered. Residue K206 forms a Glycyl lysine isopeptide (Lys-Gly) (interchain with G-Cter in SUMO2) linkage. 19 C2H2-type zinc fingers span residues 222–244 (CKCN…QRTH), 250–272 (YKCN…QRIH), 278–300 (YKCD…QRIH), 306–328 (YKCD…QRIH), 334–356 (YTCN…QKIH), 362–384 (FKCD…QKIH), 390–412 (YKCN…HMIH), 418–440 (YECN…QKTH), 446–468 (YDCA…LKIH), 474–496 (YKCN…RRIH), 502–524 (FECS…QKTH), 530–552 (YECK…ERIH), 558–580 (YQCH…RKIH), 586–608 (YKCN…KRIH), 614–636 (YECA…QKTH), 642–664 (YQCN…QRIH), 670–692 (YKCN…QNTH), 698–720 (YNCN…QRIH), and 726–748 (FGCN…QRLH).

It belongs to the krueppel C2H2-type zinc-finger protein family. In terms of tissue distribution, predominant expression in testis.

The protein resides in the nucleus. In terms of biological role, may be involved in transcriptional regulation. This Homo sapiens (Human) protein is Zinc finger protein 184 (ZNF184).